The primary structure comprises 316 residues: Bifunctional protein FolD (316 aa).

Residues 165–167 (GKS) and I231 contribute to the NADP(+) site.

It belongs to the tetrahydrofolate dehydrogenase/cyclohydrolase family. In terms of assembly, homodimer.

It carries out the reaction (6R)-5,10-methylene-5,6,7,8-tetrahydrofolate + NADP(+) = (6R)-5,10-methenyltetrahydrofolate + NADPH. The catalysed reaction is (6R)-5,10-methenyltetrahydrofolate + H2O = (6R)-10-formyltetrahydrofolate + H(+). It participates in one-carbon metabolism; tetrahydrofolate interconversion. Catalyzes the oxidation of 5,10-methylenetetrahydrofolate to 5,10-methenyltetrahydrofolate and then the hydrolysis of 5,10-methenyltetrahydrofolate to 10-formyltetrahydrofolate. The protein is Bifunctional protein FolD of Sphingobium chlorophenolicum.